The primary structure comprises 463 residues: UDP-N-acetylmuramate--L-alanine ligase (463 aa).

ATP is bound at residue 112–118; that stretch reads GTHGKTT.

The protein belongs to the MurCDEF family.

The protein localises to the cytoplasm. The catalysed reaction is UDP-N-acetyl-alpha-D-muramate + L-alanine + ATP = UDP-N-acetyl-alpha-D-muramoyl-L-alanine + ADP + phosphate + H(+). It participates in cell wall biogenesis; peptidoglycan biosynthesis. In terms of biological role, cell wall formation. This chain is UDP-N-acetylmuramate--L-alanine ligase, found in Thiobacillus denitrificans (strain ATCC 25259 / T1).